The chain runs to 156 residues: Ribosomal RNA large subunit methyltransferase H (156 aa).

Residues Leu-72, Gly-104, and 123-128 (FGAMVW) contribute to the S-adenosyl-L-methionine site.

Belongs to the RNA methyltransferase RlmH family. Homodimer.

Its subcellular location is the cytoplasm. The enzyme catalyses pseudouridine(1915) in 23S rRNA + S-adenosyl-L-methionine = N(3)-methylpseudouridine(1915) in 23S rRNA + S-adenosyl-L-homocysteine + H(+). Functionally, specifically methylates the pseudouridine at position 1915 (m3Psi1915) in 23S rRNA. The protein is Ribosomal RNA large subunit methyltransferase H of Ruegeria pomeroyi (strain ATCC 700808 / DSM 15171 / DSS-3) (Silicibacter pomeroyi).